Consider the following 290-residue polypeptide: Small ribosomal subunit biogenesis GTPase RsgA (290 aa).

The CP-type G domain occupies 61–218 (SSELLRPAVA…IVDTPGFSTL (158 aa)). GTP contacts are provided by residues 110-113 (NKVD) and 161-169 (GPSGAGKST). Cysteine 243, cysteine 248, histidine 250, and cysteine 256 together coordinate Zn(2+).

The protein belongs to the TRAFAC class YlqF/YawG GTPase family. RsgA subfamily. In terms of assembly, monomer. Associates with 30S ribosomal subunit, binds 16S rRNA. It depends on Zn(2+) as a cofactor.

The protein localises to the cytoplasm. Its function is as follows. One of several proteins that assist in the late maturation steps of the functional core of the 30S ribosomal subunit. Helps release RbfA from mature subunits. May play a role in the assembly of ribosomal proteins into the subunit. Circularly permuted GTPase that catalyzes slow GTP hydrolysis, GTPase activity is stimulated by the 30S ribosomal subunit. The chain is Small ribosomal subunit biogenesis GTPase RsgA from Clostridium botulinum (strain Eklund 17B / Type B).